A 568-amino-acid polypeptide reads, in one-letter code: Protein phosphatase 1 regulatory inhibitor subunit 16B (568 aa).

The stretch at 15–55 (EKVPTLERLRAAQKRRAQQLKKWAQYEQDLQHRKRKHERKR) forms a coiled coil. Ser-69 carries the post-translational modification Phosphoserine. ANK repeat units follow at residues 100-129 (DGLT…NVNA), 133-162 (ELWT…DLLA), 228-257 (QGAT…RVDV), and 261-290 (DGWE…SLSA). Residues 327 to 346 (RHKSSLSRRTSSAGSRGKVV) are disordered. 3 positions are modified to phosphoserine: Ser-333, Ser-337, and Ser-350. A compositionally biased stretch (low complexity) spans 333–342 (SRRTSSAGSR). Residues 373-404 (SASEDQRNSTYNGDIRETRTDQENKDPNPRLE) form a disordered region. Positions 386–404 (DIRETRTDQENKDPNPRLE) are enriched in basic and acidic residues. Phosphoserine is present on Ser-477. Positions 504-525 (GSGVSRTGEGSSEGKAPLIGGR) are disordered. The stretch at 531-560 (SNGTSVYYTVTSGDPPLLKFKAPIEEMEEK) is one ANK 5 repeat. Residue Cys-564 is the site of S-palmitoyl cysteine attachment. Cys-565 carries the cysteine methyl ester modification. Residue Cys-565 is the site of S-farnesyl cysteine attachment. Positions 566-568 (RIS) are cleaved as a propeptide — removed in mature form.

Interacts with PPP1CA, PPP1CB and MSN. Interacts (via its fourth ankyrin repeat) with the mature dimeric form of RPSA/LAMR1. Interacts with EEF1A1. Interacts with PTEN. Interacts with ECE1. Phosphorylated by PKA and, after PKA priming, by GSK3B. Phosphorylation by GSK3B reduces its association with PP1C and enhances PP1C activity. Dephosphorylation by its associated PP1C results in enhanced association with PP1C, but reduced PP1C activity.

Its subcellular location is the cell membrane. The protein resides in the nucleus. It is found in the cell projection. Functionally, regulator of protein phosphatase 1 (PP1) that acts as a positive regulator of pulmonary endothelial cell (EC) barrier function. Protects the endothelial barrier from lipopolysaccharide (LPS)-induced vascular leakage. Involved in the regulation of the PI3K/AKT signaling pathway. Involved in the regulation of angiogenesis and endothelial cell proliferation through the control of ECE1 dephosphorylation, trafficking and activity. Involved in the regulation of endothelial cell filopodia extension. May be a downstream target for TGF-beta1 signaling cascade in endothelial cells. Involved in PKA-mediated moesin dephosphorylation which is important in EC barrier protection against thrombin stimulation. Promotes the interaction of PPP1CA with RPSA/LAMR1 and in turn facilitates the dephosphorylation of RPSA/LAMR1. Involved in the dephosphorylation of EEF1A1. The sequence is that of Protein phosphatase 1 regulatory inhibitor subunit 16B (PPP1R16B) from Bos taurus (Bovine).